Reading from the N-terminus, the 325-residue chain is MMEVMDILRKYSEMADERIRESISDITPETLLRASEHLITAGGKKIRPSLALLSSEAVGGDPGDAAGVAAAIELIHTFSLIHDDIMDDDEIRRGEPAVHVLWGEPMAILAGDVLFSKAFEAVIRNGDSEMVKEALAVVVDSCVKICEGQALDMGFEERLDVTEEEYMEMIYKKTAALIAAATKAGAIMGGGSPQEIAALEDYGRCIGLAFQIHDDYLDVVSDEESLGKPVGSDIAEGKMTLMVVKALERASEKDRERLISILGSGDEKLVAEAIEIFERYGATEYAHAVALDHVRMAKERLEVLEESDAREALAMIADFVLEREH.

Isopentenyl diphosphate is bound by residues Lys-44, Arg-47, and His-76. Residues Asp-83 and Asp-87 each contribute to the Mg(2+) site. Residue Arg-92 participates in an all-trans-polyprenyl diphosphate binding. Arg-93 lines the isopentenyl diphosphate pocket. Residues Lys-173, Thr-174, Gln-211, Lys-228, and Lys-238 each coordinate an all-trans-polyprenyl diphosphate.

It belongs to the FPP/GGPP synthase family. As to quaternary structure, homodimer. Requires Mg(2+) as cofactor.

The protein resides in the cytoplasm. The polypeptide is Short chain isoprenyl diphosphate synthase (idsA) (Methanothermobacter thermautotrophicus (strain ATCC 29096 / DSM 1053 / JCM 10044 / NBRC 100330 / Delta H) (Methanobacterium thermoautotrophicum)).